Consider the following 1196-residue polypeptide: MEEDDEFGDLYSDVLQPFQPPVVLPPPPPLPHRSIDLNLRSQDQDVSEPNSAPISRVSDNDAVKLSTQDATRQAIVDGGGDDKDMSFDIEEPDADSTPTIPGLFVTGALPGLATDRGVSQVTTRIEQQVGGGGDGGYGGQGEGDDWDSDSEDDLQIVLNDSSRNVMIGGADRRSRMGDNEDDDDEDDEDPLVIVADTDPNQPMEEQMWGEDGLQGIEGDGKDGGEAGKGSGPGGATGPPKAGYSSHGYHPFHSQFKYVRPGAAPIPGGAASVGGPSSGQVRPPANLGPMAGRGRGDWRPLGMRNASAAQKGFHQPWGSNTAGRGLDFTLPSHKTIFEVDIDSFEEKPWRYPGVEMTDYFNFGLNEESWKDYCKQLDQHRIQTTMQSRIRVYESGRTDQGYDPDLPPELAAATGAQGVPVDSSNLVKPDSVQGDSAKVPANVRPTLPPGRPIPVETGSGERLPSIDTRAPRMRDLDAIIEIVCQDSHEDEPSGENGTDQADSSLPGENVPVETSYVNNKRPDTESAEHSPAQDEPHKNLLKKQDDEISRSTDSGQSFRSSSPVGDRGTRSSSVDREDVGGEAGKDAEMGEELKMSFTSPQSAVQEDDGGESKTERSSESSKARSGSHRDFQQEEDVIQDKHSSRPANNRKQYDNNAPHQSRKNQDRGKEMERTRAASKGGRENSNPHMELDSTYIYSIASREDFDKRKERDVDGAVWRRKEDDPYSRRGGDEGSRKRDREDDPGFRQRGKMRENEIRSKDDQVPSRKHMDDAGMRNIYEPDDHINKRRKDEEYLRRSRPEKNEISYGQRESMSRVKRERDDRLEHQKRDVQHKIRDDFDDHGSLRQRDDIYMQRDGNERLRERDVLDKLKLPHEDGISARGRERQVAVRGHRGSEDRSSRMKDEYKASDKEHVTKDTLRHAKQTKRRDYPGEESSSHHRGHEDFSARTDNIVNNEKKPRQERTGAKIDKFIDTLDGQRLQDRKHKDSRRKIKEQREGTESLSKQGEQNGSSVVTGSKGTNDARNCRSEIPHQPNTAKRHKENASSGDEIHDSKRGRTKLERWASHKEREDAVSAKSSSISSKLEEKENNTNGRLSEPVHGSIGKSRDVTEEKIGHDLADTKDGSEKGPGDRHLDTVEKLKKRSERFKLPMPTEKDTTGVKKMESETLPSAKIEGPVDSEGEYVWDERSCVRIGREYA.

Disordered regions lie at residues M1–G102, G117–Y248, G268–L300, G413–R472, and S485–P1174. The span at F18 to P31 shows a compositional bias: pro residues. The span at G117–E126 shows a compositional bias: polar residues. The segment covering V129–G141 has biased composition (gly residues). 2 stretches are compositionally biased toward acidic residues: residues E142 to L154 and N179 to P190. Gly residues predominate over residues A226–T236. Positions G268–G278 are enriched in low complexity. Residues K518–R548 are compositionally biased toward basic and acidic residues. The segment covering S549–P561 has biased composition (polar residues). 2 stretches are compositionally biased toward basic and acidic residues: residues R565–K592 and G608–S641. The segment covering R643–H657 has biased composition (polar residues). Composition is skewed to basic and acidic residues over residues K661–R673, S699–E802, S810–R918, R925–A945, and N953–D971. 2 consecutive short sequence motifs (nuclear localization signal) follow at residues D704–V711 and R734–D741. Residues E998 to A1021 are compositionally biased toward polar residues. Composition is skewed to basic and acidic residues over residues D1046–V1071, K1103–K1137, and T1151–S1163.

The protein belongs to the FIP1 family. In terms of assembly, component of the cleavage and polyadenylation specificity factor (CPSF) complex. Forms a complex with cleavage and polyadenylation specificity factor (CPSF) subunits CFIS1, CFIS2, CPSF30, CSTF50, CSTF64, CSTF77, FIPS3, PABN1, PABN2, PABN3, PAPS4, CFIM25 and PABN1. Binds RNA. Expressed in leaves, stems, flower tissues and roots.

The protein resides in the nucleus. Its function is as follows. Essential gene. Component of the cleavage and polyadenylation specificity factor (CPSF) complex that plays a key role in pre-mRNA 3'-end formation, recognizing the AAUAAA signal sequence and interacting with poly(A) polymerase and other factors to bring about cleavage and poly(A) addition. FIP1L1 contributes to poly(A) site recognition and stimulates poly(A) addition. Binds to U-rich RNA sequence elements surrounding the poly(A) site. May act to tether poly(A) polymerase to the CPSF complex. The protein is FIP1[V]-like protein of Arabidopsis thaliana (Mouse-ear cress).